Consider the following 176-residue polypeptide: Natural cytotoxicity triggering receptor 3 (176 aa).

The N-terminal stretch at 1-18 is a signal peptide; that stretch reads MAWMLLLILIMVYPGSCA. The Ig-like domain occupies 19–126; that stretch reads LWVSQPPEIR…VGTGNGTRLV (108 aa). Residues 19–135 lie on the Extracellular side of the membrane; it reads LWVSQPPEIR…VVEKEYPQLG (117 aa). The cysteines at positions 39 and 108 are disulfide-linked. 2 N-linked (GlcNAc...) asparagine glycosylation sites follow: Asn42 and Asn121. A helical membrane pass occupies residues 136–156; it reads AGTVLLLRAGFYAVSFLSVAV. The Cytoplasmic segment spans residues 157 to 176; that stretch reads GSTLYYQGKCHCHMGTHCHS.

Belongs to the natural cytotoxicity receptor (NCR) family. Homodimer in the unliganted form. Interacts with CD3Z. Interacts with and is activated by binding to NCR3LG1. Interacts with and is activated by binding to BAG6. Interacts with and is inhibited by binding to LGALS3.

It is found in the cell membrane. Functionally, cell membrane receptor of natural killer/NK cells that is activated by binding of extracellular ligands including BAG6 and NCR3LG1. Stimulates NK cells cytotoxicity toward neighboring cells producing these ligands. It controls, for instance, NK cells cytotoxicity against tumor cells. Engagement of NCR3 by BAG6 also promotes myeloid dendritic cells (DC) maturation, both through killing DCs that did not acquire a mature phenotype, and inducing the release by NK cells of TNFA and IFNG that promote DC maturation. This Macaca fascicularis (Crab-eating macaque) protein is Natural cytotoxicity triggering receptor 3 (NCR3).